Here is a 175-residue protein sequence, read N- to C-terminus: ATP synthase subunit delta (175 aa).

This sequence belongs to the ATPase delta chain family. F-type ATPases have 2 components, F(1) - the catalytic core - and F(0) - the membrane proton channel. F(1) has five subunits: alpha(3), beta(3), gamma(1), delta(1), epsilon(1). F(0) has three main subunits: a(1), b(2) and c(10-14). The alpha and beta chains form an alternating ring which encloses part of the gamma chain. F(1) is attached to F(0) by a central stalk formed by the gamma and epsilon chains, while a peripheral stalk is formed by the delta and b chains.

Its subcellular location is the cell membrane. In terms of biological role, f(1)F(0) ATP synthase produces ATP from ADP in the presence of a proton or sodium gradient. F-type ATPases consist of two structural domains, F(1) containing the extramembraneous catalytic core and F(0) containing the membrane proton channel, linked together by a central stalk and a peripheral stalk. During catalysis, ATP synthesis in the catalytic domain of F(1) is coupled via a rotary mechanism of the central stalk subunits to proton translocation. Its function is as follows. This protein is part of the stalk that links CF(0) to CF(1). It either transmits conformational changes from CF(0) to CF(1) or is implicated in proton conduction. The protein is ATP synthase subunit delta of Lactococcus lactis subsp. lactis (strain IL1403) (Streptococcus lactis).